Consider the following 259-residue polypeptide: Adenosylcobinamide-GDP ribazoletransferase (259 aa).

6 helical membrane passes run 9-29, 43-63, 64-84, 118-138, 143-163, and 190-210; these read NLFF…WIEV, LVGL…LYWV, SPSI…GGFH, ALAL…LALF, VSLA…SFIF, and ILLA…ALVL.

Belongs to the CobS family. The cofactor is Mg(2+).

Its subcellular location is the cell inner membrane. It carries out the reaction alpha-ribazole + adenosylcob(III)inamide-GDP = adenosylcob(III)alamin + GMP + H(+). The enzyme catalyses alpha-ribazole 5'-phosphate + adenosylcob(III)inamide-GDP = adenosylcob(III)alamin 5'-phosphate + GMP + H(+). It participates in cofactor biosynthesis; adenosylcobalamin biosynthesis; adenosylcobalamin from cob(II)yrinate a,c-diamide: step 7/7. In terms of biological role, joins adenosylcobinamide-GDP and alpha-ribazole to generate adenosylcobalamin (Ado-cobalamin). Also synthesizes adenosylcobalamin 5'-phosphate from adenosylcobinamide-GDP and alpha-ribazole 5'-phosphate. The chain is Adenosylcobinamide-GDP ribazoletransferase from Shewanella pealeana (strain ATCC 700345 / ANG-SQ1).